A 543-amino-acid chain; its full sequence is EH domain-containing protein 2 (543 aa).

Position 3 is a phosphoserine (serine 3). The Dynamin-type G domain occupies phenylalanine 55–proline 286. The segment at glycine 65–threonine 72 is G1 motif. Residue glycine 65–threonine 72 participates in ATP binding. Residues glutamate 91–proline 92 are G2 motif. Residues lysine 120–phenylalanine 122 carry the KPF loop; caveolar targeting motif. The G3 motif stretch occupies residues aspartate 153–glycine 156. The segment at asparagine 219–aspartate 222 is G4 motif. Lysine 220 serves as a coordination point for ATP. Position 243 (valine 243) is a region of interest, G5 motif. Tryptophan 258 provides a ligand contact to ATP. Residues serine 320 to alanine 340 form a mediates membrane-binding region. Phosphoserine occurs at positions 438, 468, 470, 484, and 493. The EH domain maps to aspartate 449–arginine 537. Residues leucine 481–lysine 516 form the EF-hand domain. Ca(2+) contacts are provided by aspartate 494, aspartate 496, aspartate 498, methionine 500, and glutamate 505. Residues proline 523 to glutamate 543 form a disordered region. The span at serine 534–glutamate 543 shows a compositional bias: basic residues.

Belongs to the TRAFAC class dynamin-like GTPase superfamily. Dynamin/Fzo/YdjA family. EHD subfamily. In terms of assembly, homodimer and homooligomer. Interacts with EHD1. May also interact with EHD3 and EHD4. Interacts with MYOF. Interacts with EHBP1. Interacts with FER1L5 (via second C2 domain). Interacts with CAV1 in a cholesterol-dependent manner. Interacts (via EH domain) with PACSIN2 (via NPF motifs); this interaction probably stabilizes the caveolae. As to expression, highly expressed in heart and moderately expressed in placenta, lung, and skeletal muscle.

The protein resides in the cell membrane. The protein localises to the membrane. It is found in the caveola. It localises to the endosome membrane. Its subcellular location is the cytoplasm. The protein resides in the cytosol. The very low intrinsic ATPase activity is increased upon interaction with liposomes. Functionally, ATP- and membrane-binding protein that controls membrane reorganization/tubulation upon ATP hydrolysis. Plays a role in membrane trafficking between the plasma membrane and endosomes. Important for the internalization of GLUT4. Required for fusion of myoblasts to skeletal muscle myotubes. Required for normal translocation of FER1L5 to the plasma membrane. Regulates the equilibrium between cell surface-associated and cell surface-dissociated caveolae by constraining caveolae at the cell membrane. The protein is EH domain-containing protein 2 of Homo sapiens (Human).